Reading from the N-terminus, the 176-residue chain is NAD(P)H-quinone oxidoreductase subunit 6, chloroplastic (176 aa).

Transmembrane regions (helical) follow at residues 10–30 (ILLVFLGLGLILGGLGVVLLT), 32–52 (PIYSAFSLGLVLVCISLFHIP), 61–81 (AQLLIYVGAVNVLIVFAVMFM), 107–127 (ILFSLITTIWNTSWYGIIWTT), and 152–172 (FYLPFELISIILLAALIGAIA).

This sequence belongs to the complex I subunit 6 family. NDH is composed of at least 16 different subunits, 5 of which are encoded in the nucleus.

It is found in the plastid. The protein localises to the chloroplast thylakoid membrane. The catalysed reaction is a plastoquinone + NADH + (n+1) H(+)(in) = a plastoquinol + NAD(+) + n H(+)(out). It catalyses the reaction a plastoquinone + NADPH + (n+1) H(+)(in) = a plastoquinol + NADP(+) + n H(+)(out). In terms of biological role, NDH shuttles electrons from NAD(P)H:plastoquinone, via FMN and iron-sulfur (Fe-S) centers, to quinones in the photosynthetic chain and possibly in a chloroplast respiratory chain. The immediate electron acceptor for the enzyme in this species is believed to be plastoquinone. Couples the redox reaction to proton translocation, and thus conserves the redox energy in a proton gradient. The chain is NAD(P)H-quinone oxidoreductase subunit 6, chloroplastic (ndhG) from Calycanthus floridus var. glaucus (Eastern sweetshrub).